The sequence spans 270 residues: Acyl-[acyl-carrier-protein]--UDP-N-acetylglucosamine O-acyltransferase (270 aa).

Belongs to the transferase hexapeptide repeat family. LpxA subfamily. Homotrimer.

The protein resides in the cytoplasm. It carries out the reaction a (3R)-hydroxyacyl-[ACP] + UDP-N-acetyl-alpha-D-glucosamine = a UDP-3-O-[(3R)-3-hydroxyacyl]-N-acetyl-alpha-D-glucosamine + holo-[ACP]. It participates in glycolipid biosynthesis; lipid IV(A) biosynthesis; lipid IV(A) from (3R)-3-hydroxytetradecanoyl-[acyl-carrier-protein] and UDP-N-acetyl-alpha-D-glucosamine: step 1/6. Its function is as follows. Involved in the biosynthesis of lipid A, a phosphorylated glycolipid that anchors the lipopolysaccharide to the outer membrane of the cell. The protein is Acyl-[acyl-carrier-protein]--UDP-N-acetylglucosamine O-acyltransferase of Sinorhizobium medicae (strain WSM419) (Ensifer medicae).